Reading from the N-terminus, the 1146-residue chain is Cell division cycle and apoptosis regulator protein 1 (1146 aa).

Residues Met-1–Gln-246 form an interaction with AR region. The interval Gln-200–Ser-657 is interaction with GATA2. The segment at Ile-282–Arg-351 is disordered. 2 stretches are compositionally biased toward basic and acidic residues: residues Arg-290–Pro-331 and Glu-338–Pro-349. At Ser-453 the chain carries Phosphoserine. A coiled-coil region spans residues Lys-591–Asp-615. The segment at Gln-599–Ala-635 is disordered. Acidic residues predominate over residues Glu-608 to Glu-618. Thr-624 carries the phosphothreonine modification. Positions Pro-633 to Leu-667 constitute an SAP domain. A Glycyl lysine isopeptide (Lys-Gly) (interchain with G-Cter in ubiquitin) cross-link involves residue Lys-634. An interaction with GATA1 region spans residues Asp-640–Val-1146. Phosphothreonine is present on Thr-664. Basic and acidic residues-rich tracts occupy residues Glu-671–Lys-684, Asp-691–Arg-716, Lys-793–Glu-814, and Ser-829–Ser-852. Disordered stretches follow at residues Glu-671–Arg-716 and Lys-793–Pro-912. 2 positions are modified to phosphoserine: Ser-682 and Ser-694. A compositionally biased stretch (acidic residues) spans Lys-853–Glu-884. Thr-858 carries the phosphothreonine modification. Positions Glu-885–Pro-912 are enriched in basic and acidic residues. Residue Lys-1008 forms a Glycyl lysine isopeptide (Lys-Gly) (interchain with G-Cter in SUMO1); alternate linkage. Lys-1008 participates in a covalent cross-link: Glycyl lysine isopeptide (Lys-Gly) (interchain with G-Cter in SUMO2); alternate. Positions Asp-1029–Thr-1110 form a coiled coil. Glycyl lysine isopeptide (Lys-Gly) (interchain with G-Cter in SUMO2) cross-links involve residues Lys-1063 and Lys-1131.

Directly interacts with ESR1, NR3C1 and p53/TP53. Interacts (via N-terminus) with CALCOCO1. Interacts with MED1 and GATA1. Interacts with AR and GATA2.

The protein localises to the cytoplasm. It is found in the perinuclear region. Associates with components of the Mediator and p160 coactivator complexes that play a role as intermediaries transducing regulatory signals from upstream transcriptional activator proteins to basal transcription machinery at the core promoter. Recruited to endogenous nuclear receptor target genes in response to the appropriate hormone. Also functions as a p53 coactivator. May thus play an important role in transcriptional regulation. May be involved in apoptosis signaling in the presence of the retinoid CD437. Apoptosis induction involves sequestration of 14-3-3 protein(s) and mediated altered expression of multiple cell cycle regulatory genes including MYC, CCNB1 and CDKN1A. Plays a role in cell cycle progression and/or cell proliferation. In association with CALCOCO1 enhances GATA1- and MED1-mediated transcriptional activation from the gamma-globin promoter during erythroid differentiation of K562 erythroleukemia cells. Can act as a both a coactivator and corepressor of AR-mediated transcription. Contributes to chromatin looping and AR transcription complex assembly by stabilizing AR-GATA2 association on chromatin and facilitating MED1 and RNA polymerase II recruitment to AR-binding sites. May play an important role in the growth and tumorigenesis of prostate cancer cells. This is Cell division cycle and apoptosis regulator protein 1 (Ccar1) from Mus musculus (Mouse).